Reading from the N-terminus, the 802-residue chain is Leucine--tRNA ligase (802 aa).

Positions 40–51 (PYPSGAGLHVGH) match the 'HIGH' region motif. The short motif at 576–580 (KMSKS) is the 'KMSKS' region element. Lysine 579 is a binding site for ATP.

Belongs to the class-I aminoacyl-tRNA synthetase family.

The protein localises to the cytoplasm. It catalyses the reaction tRNA(Leu) + L-leucine + ATP = L-leucyl-tRNA(Leu) + AMP + diphosphate. This is Leucine--tRNA ligase from Bacillus mycoides (strain KBAB4) (Bacillus weihenstephanensis).